Here is a 380-residue protein sequence, read N- to C-terminus: Hydrogenase maturation factor HypD2 (380 aa).

The Fe cation site is built by C36, C64, and C67.

The protein belongs to the HypD family. [4Fe-4S] cluster is required as a cofactor.

It functions in the pathway protein modification; [NiFe] hydrogenase maturation. Functionally, involved in the maturation of [NiFe] hydrogenases. Involved in the biosynthesis of the Fe(CN)(2)CO cofactor. This Bradyrhizobium diazoefficiens (strain JCM 10833 / BCRC 13528 / IAM 13628 / NBRC 14792 / USDA 110) protein is Hydrogenase maturation factor HypD2 (hypD2).